The sequence spans 1381 residues: Protein HEG homolog 1 (1381 aa).

A signal peptide spans 1–29 (MASPRASRWPPPLLLLLLPLLLLPPAAPG). The interval 24–108 (PPAAPGTRDP…APRGGSADAA (85 aa)) is disordered. Positions 25-37 (PAAPGTRDPPPSP) are enriched in pro residues. At 30-1248 (TRDPPPSPAR…GLNCGNPYQL (1219 aa)) the chain is on the extracellular side. The segment covering 38 to 52 (ARRALSLAPLAGAGL) has biased composition (low complexity). Over residues 55–74 (QLERRPEREPPPTPPRERRG) the composition is skewed to basic and acidic residues. Thr67 carries an O-linked (GalNAc...) threonine glycan. Residues 93–105 (RGPSGRAPRGGSA) are compositionally biased toward low complexity. Asn123, Asn159, Asn180, and Asn314 each carry an N-linked (GlcNAc...) asparagine glycan. Over residues 301–316 (DLSSSSESTEKLNNST) the composition is skewed to low complexity. Disordered stretches follow at residues 301–325 (DLSS…SVSQ) and 376–447 (PSAV…RSVA). Over residues 424-444 (LASSSEVQNGSPMSQTETVSR) the composition is skewed to polar residues. Asn462, Asn520, and Asn610 each carry an N-linked (GlcNAc...) asparagine glycan. The segment at 491-529 (STVQSGGSHTALGDRSYSESSSTSSSESLNSSAPRGERS) is disordered. Positions 508–522 (SESSSTSSSESLNSS) are enriched in low complexity. Disordered regions lie at residues 612 to 680 (SSYD…PLPS), 706 to 757 (SDAS…PVTS), and 774 to 830 (QTAD…TLPA). Over residues 620–648 (QPSTESPVLHTSNLPSYTPTINMPNTSVV) the composition is skewed to polar residues. Composition is skewed to low complexity over residues 657–680 (SDSS…PLPS) and 706–748 (SDAS…PVLP). Polar residues-rich tracts occupy residues 774-784 (QTADLKSQSTP) and 792-809 (ESKS…TKAV). Residues 810 to 825 (TTNSPLPPSLTESSTE) are compositionally biased toward low complexity. One can recognise an EGF-like 1 domain in the interval 985-1023 (SVNSCAVNPCLHNGECVADNTSRGYHCRCPPSWQGDDCS). 6 disulfide bridges follow: Cys989–Cys1000, Cys994–Cys1011, Cys1013–Cys1022, Cys1029–Cys1040, Cys1034–Cys1049, and Cys1051–Cys1062. Positions 1025-1063 (DVNECLSNPCPSTAMCNNTQGSFICKCPVGYQLEKGICN) constitute an EGF-like 2; calcium-binding domain. Asn1137 is a glycosylation site (N-linked (GlcNAc...) asparagine). The chain crosses the membrane as a helical span at residues 1249–1269 (ITVVIAAAGGGLLLILGIALI). Residues 1270–1381 (VTCCRKNKND…SDESRRRDYF (112 aa)) lie on the Cytoplasmic side of the membrane. Ser1359 is subject to Phosphoserine.

In terms of assembly, interacts with CCM2 and KRIT1; KRIT1 markedly facilitates interaction with CCM2.

The protein localises to the cell membrane. It localises to the cell junction. Its subcellular location is the secreted. Receptor component of the CCM signaling pathway which is a crucial regulator of heart and vessel formation and integrity. May act through the stabilization of endothelial cell junctions. In Homo sapiens (Human), this protein is Protein HEG homolog 1 (HEG1).